The chain runs to 90 residues: Small ribosomal subunit protein uS15c (90 aa).

It belongs to the universal ribosomal protein uS15 family. Part of the 30S ribosomal subunit.

The protein localises to the plastid. It is found in the chloroplast. The chain is Small ribosomal subunit protein uS15c (rps15) from Morus indica (Mulberry).